The primary structure comprises 176 residues: Large ribosomal subunit protein uL16 (176 aa).

Belongs to the universal ribosomal protein uL16 family.

This is Large ribosomal subunit protein uL16 from Halobacterium salinarum (strain ATCC 29341 / DSM 671 / R1).